The following is a 145-amino-acid chain: Large ribosomal subunit protein bL9 (145 aa).

It belongs to the bacterial ribosomal protein bL9 family.

Binds to the 23S rRNA. This chain is Large ribosomal subunit protein bL9, found in Mesomycoplasma hyopneumoniae (strain J / ATCC 25934 / NCTC 10110) (Mycoplasma hyopneumoniae).